The chain runs to 208 residues: Na(+)-translocating NADH-quinone reductase subunit D (208 aa).

The next 5 helical transmembrane spans lie at 42–62, 72–92, 103–123, 131–151, and 178–198; these read IVMG…ISLV, IIVQ…LLQA, VFVG…AFAM, LIDG…VATV, and NGLF…IWGL.

The protein belongs to the NqrDE/RnfAE family. In terms of assembly, composed of six subunits; NqrA, NqrB, NqrC, NqrD, NqrE and NqrF.

It is found in the cell inner membrane. It catalyses the reaction a ubiquinone + n Na(+)(in) + NADH + H(+) = a ubiquinol + n Na(+)(out) + NAD(+). Functionally, NQR complex catalyzes the reduction of ubiquinone-1 to ubiquinol by two successive reactions, coupled with the transport of Na(+) ions from the cytoplasm to the periplasm. NqrA to NqrE are probably involved in the second step, the conversion of ubisemiquinone to ubiquinol. This is Na(+)-translocating NADH-quinone reductase subunit D from Neisseria meningitidis serogroup B (strain ATCC BAA-335 / MC58).